A 465-amino-acid chain; its full sequence is MDLFLTLLIIAIVLAVAGLLFYMQKKHVSFSIRVLLALGAGVVYGLLLQFFFAPDSSVIQQSMDWVNILGTGYVRFLQMIVMPLIFISILSAFTRMTLTKNLGKISALILGTLIATTAIAAAIGITASSVFQLEAIDIPAGEAELSHGDALEESYAGMEAATLPQQIVELIPANPFLDLTGERPTSAIGVVIFSAFLGVAYLGVRRKQPEAADTFKGIVNALYAIIMRVVTLILRLTPYGVLAIMTRTVATSDLQAISTLGTFVLASYAALIVMFVIHLIILAATGLSPITYVKKAFPVLAFAFTSRTSAGALPMNIQTQKKLGVPEGIANFAGSFGLSIGQNGCAGIYPAMLAVMIAPTVGQNPLEPTFILLLIVVIAISSFGVAGVGGGATFAAILVLSALDFPIALAGLLISIEPLIDMGRTALNVSGSMVSGIFTSKVTGSLDKEVFSDPNEQLDTQDMQG.

Transmembrane regions (helical) follow at residues 3-23 (LFLT…LFYM), 34-54 (VLLA…FFAP), 73-93 (YVRF…LSAF), 105-125 (ISAL…AIGI), 184-204 (PTSA…YLGV), 224-246 (AIIM…AIMT), 263-283 (FVLA…IILA), 338-358 (LSIG…VMIA), 370-390 (FILL…GVGG), and 394-414 (FAAI…GLLI).

This sequence belongs to the dicarboxylate/amino acid:cation symporter (DAACS) (TC 2.A.23) family.

Its subcellular location is the membrane. In terms of biological role, mediates uptake of L-cystine, the oxidized form of L-cysteine. The protein is L-cystine uptake protein TcyP of Shouchella clausii (strain KSM-K16) (Alkalihalobacillus clausii).